Reading from the N-terminus, the 245-residue chain is tRNA1(Val) (adenine(37)-N6)-methyltransferase (245 aa).

The protein belongs to the methyltransferase superfamily. tRNA (adenine-N(6)-)-methyltransferase family.

It is found in the cytoplasm. The catalysed reaction is adenosine(37) in tRNA1(Val) + S-adenosyl-L-methionine = N(6)-methyladenosine(37) in tRNA1(Val) + S-adenosyl-L-homocysteine + H(+). Functionally, specifically methylates the adenine in position 37 of tRNA(1)(Val) (anticodon cmo5UAC). The protein is tRNA1(Val) (adenine(37)-N6)-methyltransferase of Escherichia coli O7:K1 (strain IAI39 / ExPEC).